A 479-amino-acid polypeptide reads, in one-letter code: 3-isopropylmalate dehydratase large subunit (479 aa).

[4Fe-4S] cluster contacts are provided by Cys353, Cys414, and Cys417.

This sequence belongs to the aconitase/IPM isomerase family. LeuC type 1 subfamily. Heterodimer of LeuC and LeuD. [4Fe-4S] cluster is required as a cofactor.

It catalyses the reaction (2R,3S)-3-isopropylmalate = (2S)-2-isopropylmalate. It participates in amino-acid biosynthesis; L-leucine biosynthesis; L-leucine from 3-methyl-2-oxobutanoate: step 2/4. Its function is as follows. Catalyzes the isomerization between 2-isopropylmalate and 3-isopropylmalate, via the formation of 2-isopropylmaleate. In Xanthomonas campestris pv. campestris (strain 8004), this protein is 3-isopropylmalate dehydratase large subunit.